The following is a 256-amino-acid chain: MARRPLVMGNWKLNGSKAFTQQLIAELKTELAEITGCDVAIAPPVMYLSEAEIALAGQSTIRLGAQNVDINTQGAFTGDISTAMLQEFCAKYIIIGHSERRTYHAESDQFIAKKFAALKTAGLTPVLCIGETEAENEAGQTQQVCARQIDAIINSLGVEAFNQAVIAYEPIWAIGTGKSATPAQAQAVHAFIRQHIAEKSQAVADQLIIQYGGSVNDTNAAELFSQPDIDGALVGGASLKATAFAEIVKAAEKAKA.

10–12 (NWK) is a substrate binding site. Histidine 97 (electrophile) is an active-site residue. The Proton acceptor role is filled by glutamate 169. Substrate is bound by residues glycine 175, serine 214, and 235-236 (GG).

The protein belongs to the triosephosphate isomerase family. As to quaternary structure, homodimer.

The protein localises to the cytoplasm. The catalysed reaction is D-glyceraldehyde 3-phosphate = dihydroxyacetone phosphate. It participates in carbohydrate biosynthesis; gluconeogenesis. Its pathway is carbohydrate degradation; glycolysis; D-glyceraldehyde 3-phosphate from glycerone phosphate: step 1/1. In terms of biological role, involved in the gluconeogenesis. Catalyzes stereospecifically the conversion of dihydroxyacetone phosphate (DHAP) to D-glyceraldehyde-3-phosphate (G3P). The sequence is that of Triosephosphate isomerase from Haemophilus ducreyi (strain 35000HP / ATCC 700724).